A 128-amino-acid polypeptide reads, in one-letter code: 3-aminoacrylate deaminase RutC (128 aa).

The protein belongs to the RutC family.

The catalysed reaction is (Z)-3-aminoacrylate + H2O + H(+) = 3-oxopropanoate + NH4(+). Its function is as follows. Involved in pyrimidine catabolism. Catalyzes the deamination of 3-aminoacrylate to malonic semialdehyde, a reaction that can also occur spontaneously. RutC may facilitate the reaction and modulate the metabolic fitness, rather than catalyzing essential functions. The sequence is that of 3-aminoacrylate deaminase RutC from Enterobacter sp. (strain 638).